The sequence spans 217 residues: Zinc finger CCHC-type and RNA-binding motif-containing protein 1 (217 aa).

Positions 10 to 88 (STVYVSNLPF…RVIKASIAID (79 aa)) constitute an RRM domain. A CCHC-type zinc finger spans residues 105–122 (SKCYECGESGHLSYACPK). The segment at 120–217 (CPKNMLGERE…YFSDEEELSD (98 aa)) is disordered. The segment covering 145–163 (PEEEIEEVEVSEEEGEDPA) has biased composition (acidic residues). Ser-155, Ser-210, and Ser-216 each carry phosphoserine.

Component of the U11/U12 snRNPs that are part of the U12-type spliceosome. Interacts with ZRSR1.

It localises to the nucleus. Its subcellular location is the nucleoplasm. This Rattus norvegicus (Rat) protein is Zinc finger CCHC-type and RNA-binding motif-containing protein 1 (Zcrb1).